We begin with the raw amino-acid sequence, 21 residues long: Serine protease inhibitor 1 (21 aa).

Residues 1-21 (EQQCTPGQTKKEDCNNCTSGD) enclose the Pacifastin domain. The tract at residues 1–21 (EQQCTPGQTKKEDCNNCTSGD) is disordered.

Belongs to the protease inhibitor I19 family. As to expression, expressed in hemolymph.

It localises to the secreted. In terms of biological role, probable serine protease inhibitor. This is Serine protease inhibitor 1 from Melanoplus sanguinipes (Migratory grasshopper).